The primary structure comprises 76 residues: Large ribosomal subunit protein eL20 (76 aa).

The protein belongs to the eukaryotic ribosomal protein eL20 family. Part of the 50S ribosomal subunit. Binds 23S rRNA.

The sequence is that of Large ribosomal subunit protein eL20 from Methanococcus maripaludis (strain C7 / ATCC BAA-1331).